A 49-amino-acid chain; its full sequence is Large ribosomal subunit protein bL33B (49 aa).

Belongs to the bacterial ribosomal protein bL33 family.

The sequence is that of Large ribosomal subunit protein bL33B from Levilactobacillus brevis (strain ATCC 367 / BCRC 12310 / CIP 105137 / JCM 1170 / LMG 11437 / NCIMB 947 / NCTC 947) (Lactobacillus brevis).